The chain runs to 238 residues: Cysteine-rich venom protein (238 aa).

The N-terminal stretch at 1–19 (MIAFIVLLSLAAVLQQSSG) is a signal peptide. An SCP domain is found at 38-164 (VDKHNALRRS…STKYLYVCQY (127 aa)). Intrachain disulfides connect Cys75–Cys153, Cys92–Cys165, Cys148–Cys162, Cys184–Cys191, Cys187–Cys196, Cys200–Cys233, Cys209–Cys227, and Cys218–Cys231. Residues 200–233 (CKYEDAFTNCNELAKETKCKTEWIKSKCPATCFC) form the ShKT domain.

The protein belongs to the CRISP family. As to expression, expressed by the venom gland.

Its subcellular location is the secreted. In terms of biological role, blocks olfactory (CNGA2) and retinal (CNGA1) CNG channel currents. Does not affect neither depolarization- nor caffeine-induced contraction of smooth muscle. This is Cysteine-rich venom protein from Drysdalia coronoides (White-lipped snake).